The sequence spans 193 residues: Probable nicotinate-nucleotide adenylyltransferase (193 aa).

The protein belongs to the NadD family.

It carries out the reaction nicotinate beta-D-ribonucleotide + ATP + H(+) = deamido-NAD(+) + diphosphate. It participates in cofactor biosynthesis; NAD(+) biosynthesis; deamido-NAD(+) from nicotinate D-ribonucleotide: step 1/1. Functionally, catalyzes the reversible adenylation of nicotinate mononucleotide (NaMN) to nicotinic acid adenine dinucleotide (NaAD). In Coprothermobacter proteolyticus (strain ATCC 35245 / DSM 5265 / OCM 4 / BT), this protein is Probable nicotinate-nucleotide adenylyltransferase.